Here is a 453-residue protein sequence, read N- to C-terminus: Ribulose bisphosphate carboxylase large chain (453 aa).

The propeptide occupies methionine 1–serine 2. Proline 3 carries the post-translational modification N-acetylproline. Lysine 14 is subject to N6,N6,N6-trimethyllysine. 2 residues coordinate substrate: asparagine 123 and threonine 173. Lysine 175 serves as the catalytic Proton acceptor. Position 177 (lysine 177) interacts with substrate. Lysine 201, aspartate 203, and glutamate 204 together coordinate Mg(2+). The residue at position 201 (lysine 201) is an N6-carboxylysine. The active-site Proton acceptor is the histidine 294. Residues arginine 295, histidine 327, and serine 379 each contribute to the substrate site.

The protein belongs to the RuBisCO large chain family. Type I subfamily. Heterohexadecamer of 8 large chains and 8 small chains; disulfide-linked. The disulfide link is formed within the large subunit homodimers. Requires Mg(2+) as cofactor. In terms of processing, the disulfide bond which can form in the large chain dimeric partners within the hexadecamer appears to be associated with oxidative stress and protein turnover.

It localises to the plastid. The protein localises to the chloroplast. The enzyme catalyses 2 (2R)-3-phosphoglycerate + 2 H(+) = D-ribulose 1,5-bisphosphate + CO2 + H2O. It carries out the reaction D-ribulose 1,5-bisphosphate + O2 = 2-phosphoglycolate + (2R)-3-phosphoglycerate + 2 H(+). Functionally, ruBisCO catalyzes two reactions: the carboxylation of D-ribulose 1,5-bisphosphate, the primary event in carbon dioxide fixation, as well as the oxidative fragmentation of the pentose substrate in the photorespiration process. Both reactions occur simultaneously and in competition at the same active site. This is Ribulose bisphosphate carboxylase large chain from Galium album (White bedstraw).